The primary structure comprises 135 residues: Retinol-binding protein 1 (135 aa).

Residues 22–32 (RALDVNVALRK) are important for interaction with STRA6. Residues lysine 41, methionine 63, and glutamine 109 each contribute to the all-trans-retinol site.

Belongs to the calycin superfamily. Fatty-acid binding protein (FABP) family. In terms of assembly, interacts (only as retinol-free apoprotein) with STRA6.

It is found in the cytoplasm. Its subcellular location is the lipid droplet. Its function is as follows. Cytoplasmic retinol-binding protein. Accepts retinol from the transport protein STRA6, and thereby contributes to retinol uptake, storage and retinoid homeostasis. The protein is Retinol-binding protein 1 (Rbp1) of Mus musculus (Mouse).